Consider the following 462-residue polypeptide: Cysteine--tRNA ligase (462 aa).

Cys29 provides a ligand contact to Zn(2+). Residues 31–41 (PTVYNHAHIGN) carry the 'HIGH' region motif. The Zn(2+) site is built by Cys211, His236, and Glu240. The short motif at 269 to 273 (KMSKS) is the 'KMSKS' region element. ATP is bound at residue Lys272.

The protein belongs to the class-I aminoacyl-tRNA synthetase family. Monomer. Zn(2+) serves as cofactor.

The protein localises to the cytoplasm. It catalyses the reaction tRNA(Cys) + L-cysteine + ATP = L-cysteinyl-tRNA(Cys) + AMP + diphosphate. The chain is Cysteine--tRNA ligase from Caulobacter sp. (strain K31).